We begin with the raw amino-acid sequence, 643 residues long: Threonine--tRNA ligase (643 aa).

Residues 1–61 (MPTIKFIDGT…TNDSIVKFVY (61 aa)) form the TGS domain. A catalytic region spans residues 244 to 535 (DHRKISKILD…LIEEYIGNFP (292 aa)). Residues C335, H386, and H512 each coordinate Zn(2+).

The protein belongs to the class-II aminoacyl-tRNA synthetase family. In terms of assembly, homodimer. Zn(2+) serves as cofactor.

It localises to the cytoplasm. It carries out the reaction tRNA(Thr) + L-threonine + ATP = L-threonyl-tRNA(Thr) + AMP + diphosphate + H(+). Functionally, catalyzes the attachment of threonine to tRNA(Thr) in a two-step reaction: L-threonine is first activated by ATP to form Thr-AMP and then transferred to the acceptor end of tRNA(Thr). Also edits incorrectly charged L-seryl-tRNA(Thr). This chain is Threonine--tRNA ligase, found in Buchnera aphidicola subsp. Baizongia pistaciae (strain Bp).